A 160-amino-acid chain; its full sequence is Endoribonuclease YbeY (160 aa).

Zn(2+) contacts are provided by histidine 123, histidine 127, and histidine 133.

Belongs to the endoribonuclease YbeY family. Zn(2+) is required as a cofactor.

It is found in the cytoplasm. Single strand-specific metallo-endoribonuclease involved in late-stage 70S ribosome quality control and in maturation of the 3' terminus of the 16S rRNA. The sequence is that of Endoribonuclease YbeY from Shouchella clausii (strain KSM-K16) (Alkalihalobacillus clausii).